Reading from the N-terminus, the 353-residue chain is MIRIAIDVMGGDFGPDVAIPGAAKALERHNDVTFLLYGQKSKCDPILAQYPALREKSVFHDCEVSVSMDEKPSQALRRGRYVSSMWRAIEAVKLGEADVAVSAGNTGALMAMAKFCLRTMARVERPAIAGIWPTLKGESIVLDVGATIGADSQQLLDFALMGGAMARALFDIDRPTVGLLNVGVEEVKGQEEVREAGRLIREADLGTIDYRGFVEGDDIGKGTVDVVVTEGFTGNIALKAAEGTARQITTLLREAISRSFFAKIGYILAKSAFDVLREKMDPRKVNGGVFLGLNGIVIKSHGGTDAIGFASAVDVGYDMVHNGLTAKIENDLKIYHARRLPPPAPEALVADEE.

Belongs to the PlsX family. As to quaternary structure, homodimer. Probably interacts with PlsY.

The protein resides in the cytoplasm. It catalyses the reaction a fatty acyl-[ACP] + phosphate = an acyl phosphate + holo-[ACP]. It participates in lipid metabolism; phospholipid metabolism. Functionally, catalyzes the reversible formation of acyl-phosphate (acyl-PO(4)) from acyl-[acyl-carrier-protein] (acyl-ACP). This enzyme utilizes acyl-ACP as fatty acyl donor, but not acyl-CoA. This is Phosphate acyltransferase from Agrobacterium fabrum (strain C58 / ATCC 33970) (Agrobacterium tumefaciens (strain C58)).